The following is a 440-amino-acid chain: tRNA(Ile)-lysidine synthase (440 aa).

25–30 (SGGVDS) contributes to the ATP binding site.

It belongs to the tRNA(Ile)-lysidine synthase family.

The protein resides in the cytoplasm. The catalysed reaction is cytidine(34) in tRNA(Ile2) + L-lysine + ATP = lysidine(34) in tRNA(Ile2) + AMP + diphosphate + H(+). Its function is as follows. Ligates lysine onto the cytidine present at position 34 of the AUA codon-specific tRNA(Ile) that contains the anticodon CAU, in an ATP-dependent manner. Cytidine is converted to lysidine, thus changing the amino acid specificity of the tRNA from methionine to isoleucine. In Vibrio cholerae serotype O1 (strain ATCC 39315 / El Tor Inaba N16961), this protein is tRNA(Ile)-lysidine synthase.